The following is an 850-amino-acid chain: Bifunctional levopimaradiene synthase, chloroplastic (850 aa).

Residues 1–52 (MALPSSSLSSQIHTGATTQCIPHFHGSLNAGTSAGKRRSLYLRWGKGPSKIV) constitute a chloroplast transit peptide. Residue K250 participates in substrate binding. Mg(2+)-binding residues include D383 and D385. Positions 383–386 (DIDD) match the DXDD motif motif. K470 contacts substrate. 5 residues coordinate Mg(2+): D602, D606, N746, T750, and E754. Positions 602–606 (DDLYD) match the DDXXD motif motif.

The protein belongs to the terpene synthase family. Tpsd subfamily. It depends on Mg(2+) as a cofactor. As to expression, expressed in young tissues such as flushing buds and green bark tissues. Lower levels in mature needles and bark.

It is found in the plastid. Its subcellular location is the chloroplast. The enzyme catalyses (2E,6E,10E)-geranylgeranyl diphosphate = (+)-copalyl diphosphate. It catalyses the reaction (+)-copalyl diphosphate = abieta-8(14),12-diene + diphosphate. The catalysed reaction is (+)-copalyl diphosphate = neoabietadiene + diphosphate. Its pathway is terpene metabolism; oleoresin biosynthesis. Its function is as follows. Involved in defensive oleoresin formation in conifers in response to insect attack or other injury. Involved in diterpene (C20) olefins biosynthesis. Bifunctional enzyme that catalyzes two sequential cyclizations of geranylgeranyl diphosphate (GGPP) to levopimaradiene. Levopimaradiene is the major products of the enzyme followed by abietadiene, neoabietadiene and palustradiene. No activity with geranyl diphosphate (GPP) or farnesyl diphosphate (FPP) as substrate. The protein is Bifunctional levopimaradiene synthase, chloroplastic (LPS) of Pinus taeda (Loblolly pine).